The primary structure comprises 511 residues: Early growth response protein 1 (511 aa).

Disordered regions lie at residues 133–169 (ASIP…LSCS) and 291–312 (PSRM…RPYA). The segment covering 137–169 (SSTSQATHPSSSSTSSIPSSSSSSTSSASLSCS) has biased composition (low complexity). 3 consecutive C2H2-type zinc fingers follow at residues 311-335 (YACP…IRIH), 341-363 (FQCR…IRTH), and 369-391 (FACE…TKIH). The segment at 384–406 (RKRHTKIHMRQKDKKAEKGATAA) is disordered. Basic residues predominate over residues 386 to 396 (RHTKIHMRQKD).

It belongs to the EGR C2H2-type zinc-finger protein family. As to expression, detected in muscle and brain.

It localises to the nucleus. Its subcellular location is the cytoplasm. Functionally, transcriptional regulator. Recognizes and binds to the DNA sequence 5'-GCG(T/G)GGGCG-3'(EGR-site) in the promoter region of target genes. Binds double-stranded target DNA, irrespective of the cytosine methylation status. Regulates the transcription of numerous target genes, and thereby plays an important role in regulating the response to growth factors, DNA damage, and ischemia. Plays a role in the regulation of cell survival, proliferation and cell death. Mediates responses to ischemia and hypoxia; regulates the expression of proteins that are involved in inflammatory processes. Plays a role in regulating the expression of circadian clock genes. Plays a role in the organization of Muller glia cells in the inner and outer plexiform layers of the retina. This is Early growth response protein 1 (egr1) from Danio rerio (Zebrafish).